Consider the following 577-residue polypeptide: Aspartate--tRNA(Asp/Asn) ligase (577 aa).

E171 serves as a coordination point for L-aspartate. The aspartate stretch occupies residues 195–198 (QLFK). R217 provides a ligand contact to L-aspartate. ATP is bound by residues 217 to 219 (RDE) and Q226. An L-aspartate-binding site is contributed by H444. E474 lines the ATP pocket. R481 serves as a coordination point for L-aspartate. 526–529 (GFDR) contacts ATP.

Belongs to the class-II aminoacyl-tRNA synthetase family. Type 1 subfamily. As to quaternary structure, homodimer.

The protein localises to the cytoplasm. The catalysed reaction is tRNA(Asx) + L-aspartate + ATP = L-aspartyl-tRNA(Asx) + AMP + diphosphate. In terms of biological role, aspartyl-tRNA synthetase with relaxed tRNA specificity since it is able to aspartylate not only its cognate tRNA(Asp) but also tRNA(Asn). Reaction proceeds in two steps: L-aspartate is first activated by ATP to form Asp-AMP and then transferred to the acceptor end of tRNA(Asp/Asn). This Helicobacter pylori (strain HPAG1) protein is Aspartate--tRNA(Asp/Asn) ligase.